The chain runs to 77 residues: Defensin-like protein 4 (77 aa).

The N-terminal stretch at 1 to 30 (MKFSMRLISAVLFLVMIFVATGMGPVTVEA) is a signal peptide. Intrachain disulfides connect cysteine 33/cysteine 77, cysteine 44/cysteine 64, cysteine 50/cysteine 71, and cysteine 54/cysteine 73.

Belongs to the DEFL family. Expressed in roots, siliques and seeds.

It is found in the secreted. Confers broad-spectrum resistance to pathogens. This chain is Defensin-like protein 4 (PDF2.1), found in Arabidopsis thaliana (Mouse-ear cress).